The sequence spans 305 residues: Protoheme IX farnesyltransferase 1 (305 aa).

Helical transmembrane passes span 22 to 42 (IKTGIIKSNLVPMFAGLTLAL), 53 to 73 (IPEILFAFIGSILIIGAAGAF), 94 to 114 (VTGDISPKTALWLGIFMTIFG), 115 to 135 (LVFLALTTYLAAILGFIGLFL), 154 to 174 (IGSVSGAMPPLIGWAAIYPDV), 179 to 199 (IIGLFIIMIIWQMPHFYAIAI), 230 to 250 (LVILIIISILLGSLSIGLMLV), and 283 to 303 (LFHMTILFSTVIIYSLVGIFF).

The protein belongs to the UbiA prenyltransferase family. Protoheme IX farnesyltransferase subfamily. Interacts with CtaA.

It localises to the cell membrane. The catalysed reaction is heme b + (2E,6E)-farnesyl diphosphate + H2O = Fe(II)-heme o + diphosphate. The protein operates within porphyrin-containing compound metabolism; heme O biosynthesis; heme O from protoheme: step 1/1. Its function is as follows. Converts heme B (protoheme IX) to heme O by substitution of the vinyl group on carbon 2 of heme B porphyrin ring with a hydroxyethyl farnesyl side group. This is Protoheme IX farnesyltransferase 1 from Bacillus cytotoxicus (strain DSM 22905 / CIP 110041 / 391-98 / NVH 391-98).